We begin with the raw amino-acid sequence, 1148 residues long: Ice nucleation protein (1148 aa).

3 disordered regions span residues Ala-110–Ile-131, Tyr-222–Ser-256, and Gly-367–Leu-394. A compositionally biased stretch (low complexity) spans Ser-114–Pro-128. The interval Ala-180 to Ile-1099 is octapeptide periodicity. Positions Glu-230–Leu-250 are enriched in polar residues.

The protein belongs to the bacterial ice nucleation protein family.

Its subcellular location is the cell outer membrane. In terms of biological role, ice nucleation proteins enable bacteria to nucleate crystallization in supercooled water. This chain is Ice nucleation protein (inaK), found in Pseudomonas syringae.